A 163-amino-acid chain; its full sequence is Peptide deformylase (163 aa).

Fe cation-binding residues include Cys-91 and His-133. Glu-134 is an active-site residue. Position 137 (His-137) interacts with Fe cation.

Belongs to the polypeptide deformylase family. The cofactor is Fe(2+).

It carries out the reaction N-terminal N-formyl-L-methionyl-[peptide] + H2O = N-terminal L-methionyl-[peptide] + formate. Functionally, removes the formyl group from the N-terminal Met of newly synthesized proteins. Requires at least a dipeptide for an efficient rate of reaction. N-terminal L-methionine is a prerequisite for activity but the enzyme has broad specificity at other positions. The chain is Peptide deformylase from Lachnoclostridium phytofermentans (strain ATCC 700394 / DSM 18823 / ISDg) (Clostridium phytofermentans).